Here is a 336-residue protein sequence, read N- to C-terminus: MLYLVLSKLVWIVLLAIVLILCVAYLTYAERKVIAATQLRVGPDLVGPFGLLQPIADAIKVLLKEIIIPNAASPKLFLFAPVIIFVLALVGWAVIPFGTSEIDGVEVPTVIANVNLGVMYLLGVAALEVYGTIIAGWASKSSYSFLGALRSASQMISYEIVIAPVVMTVILLTGSLNLAEIVVIKHSLPYWVDILMLPMTFIFFVSILAETNRHPFDLPEAEAELVSGYNVEYSSIPFALFFLGEYANMILSSSIMATLFLGGWYPPINWWGLSIVPGFIWFILKIVFVLFCFLIVRATLPRYRYDQLMRLCWKVFLPVTLLWIVVIGGLVAFNIV.

8 consecutive transmembrane segments (helical) span residues 9–29 (LVWI…LTYA), 77–97 (FLFA…VIPF), 116–136 (LGVM…IIAG), 156–176 (ISYE…TGSL), 188–208 (LPYW…VSIL), 236–256 (IPFA…SSIM), 275–295 (IVPG…CFLI), and 315–335 (VFLP…AFNI).

This sequence belongs to the complex I subunit 1 family. NDH-1 is composed of 14 different subunits. Subunits NuoA, H, J, K, L, M, N constitute the membrane sector of the complex.

The protein resides in the cell inner membrane. The enzyme catalyses a quinone + NADH + 5 H(+)(in) = a quinol + NAD(+) + 4 H(+)(out). Functionally, NDH-1 shuttles electrons from NADH, via FMN and iron-sulfur (Fe-S) centers, to quinones in the respiratory chain. The immediate electron acceptor for the enzyme in this species is believed to be ubiquinone. Couples the redox reaction to proton translocation (for every two electrons transferred, four hydrogen ions are translocated across the cytoplasmic membrane), and thus conserves the redox energy in a proton gradient. This subunit may bind ubiquinone. In Neorickettsia sennetsu (strain ATCC VR-367 / Miyayama) (Ehrlichia sennetsu), this protein is NADH-quinone oxidoreductase subunit H.